Here is a 172-residue protein sequence, read N- to C-terminus: Cold-inducible RNA-binding protein (172 aa).

One can recognise an RRM domain in the interval 6 to 84 (GKLFVGGLSF…RQIRVDQAGK (79 aa)). The disordered stretch occupies residues 69 to 172 (GKSVDGRQIR…SYDSYATHNE (104 aa)). Composition is skewed to gly residues over residues 93 to 106 (YRGG…FFRG) and 114 to 125 (FSRGGGDRGYGG). Phosphoserine occurs at positions 130, 138, 146, 156, 159, and 163. Residues 138-172 (SRDYYSSRSQSGGYSDRSSGGSYRDSYDSYATHNE) are compositionally biased toward low complexity.

Interacts with EIF4G1. Associates with ribosomes. Methylated on arginine residues. Methylation of the RGG motifs is a prerequisite for recruitment into SGs. Post-translationally, phosphorylated by CK2, GSK3A and GSK3B. Phosphorylation by GSK3B increases RNA-binding activity to the TXN 3'-UTR transcript upon exposure to UV radiation.

Its subcellular location is the nucleus. It is found in the nucleoplasm. The protein resides in the cytoplasm. Its function is as follows. Cold-inducible mRNA binding protein that plays a protective role in the genotoxic stress response by stabilizing transcripts of genes involved in cell survival. Acts as a translational activator. Seems to play an essential role in cold-induced suppression of cell proliferation. Binds specifically to the 3'-untranslated regions (3'-UTRs) of stress-responsive transcripts RPA2 and TXN. Acts as a translational repressor. Promotes assembly of stress granules (SGs), when overexpressed. The polypeptide is Cold-inducible RNA-binding protein (CIRBP) (Pongo abelii (Sumatran orangutan)).